The sequence spans 460 residues: Argininosuccinate lyase (460 aa).

The protein belongs to the lyase 1 family. Argininosuccinate lyase subfamily.

The protein resides in the cytoplasm. The catalysed reaction is 2-(N(omega)-L-arginino)succinate = fumarate + L-arginine. Its pathway is amino-acid biosynthesis; L-arginine biosynthesis; L-arginine from L-ornithine and carbamoyl phosphate: step 3/3. The polypeptide is Argininosuccinate lyase (Staphylococcus haemolyticus (strain JCSC1435)).